The following is a 606-amino-acid chain: Urocanate reductase (606 aa).

Residues 1–40 (MSNLSRRNFITGGAIAALGGTLAIAGCAPKGESSSTVAGA) constitute a signal peptide (tat-type signal). Threonine 111 bears the FMN phosphoryl threonine mark. FAD-binding residues include alanine 163, glutamate 182, threonine 191, glycine 195, glycine 196, alanine 197, alanine 305, and aspartate 373. Arginine 433 serves as the catalytic Proton donor. Positions 572 and 588 each coordinate FAD.

The protein belongs to the FAD-dependent oxidoreductase 2 family. FRD/SDH subfamily. Requires FAD as cofactor. The cofactor is FMN. In terms of processing, predicted to be exported by the Tat system. The position of the signal peptide cleavage has not been experimentally proven.

The catalysed reaction is dihydrourocanate + A = urocanate + AH2. In terms of biological role, catalyzes the two-electron reduction of urocanate to dihydrourocanate (also named imidazole propionate or deamino-histidine). Dihydrourocanate is present at higher concentrations in subjects with type 2 diabetes, and directly impairs glucose tolerance and insulin signaling at the level of insulin receptor substrate (IRS) through activation of p38 gamma (MAPK12)-p62-mTORC1. Therefore, the UrdA enzyme from the gut bacteria E.lenta strain DSM 2243 may contribute to the pathogenesis of type 2 diabetes by producing the microbial metabolite dihydrourocanate. This is Urocanate reductase from Eggerthella lenta (strain ATCC 25559 / DSM 2243 / CCUG 17323 / JCM 9979 / KCTC 3265 / NCTC 11813 / VPI 0255 / 1899 B) (Eubacterium lentum).